Here is a 302-residue protein sequence, read N- to C-terminus: Pathogenicity locus probable regulatory protein HrpS (302 aa).

Residues 9–237 form the Sigma-54 factor interaction domain; that stretch reads DDLDAERVPN…LKAAAKRHVL (229 aa). ATP contacts are provided by residues 37-44 and 99-108; these read GETGTGKD and AQGGTLYLDE. Residues 279–298 constitute a DNA-binding region (H-T-H motif); the sequence is IDAASLELDIPRRTLYRRIK.

Regulates the activation of the sigma factor HrpL which itself induces the expression of hprD as well as other hrp loci which are involved in plant pathogenicity, hrmA and avr genes. Probably interacts with sigma-54. This is Pathogenicity locus probable regulatory protein HrpS (hrpS) from Pseudomonas syringae pv. syringae.